The following is a 428-amino-acid chain: Serine--tRNA ligase (428 aa).

235–237 (TAE) contacts L-serine. 266–268 (RSE) is a binding site for ATP. L-serine is bound at residue Glu-289. 353–356 (EISS) lines the ATP pocket. Ser-389 contributes to the L-serine binding site.

This sequence belongs to the class-II aminoacyl-tRNA synthetase family. Type-1 seryl-tRNA synthetase subfamily. In terms of assembly, homodimer. The tRNA molecule binds across the dimer.

It is found in the cytoplasm. The catalysed reaction is tRNA(Ser) + L-serine + ATP = L-seryl-tRNA(Ser) + AMP + diphosphate + H(+). It catalyses the reaction tRNA(Sec) + L-serine + ATP = L-seryl-tRNA(Sec) + AMP + diphosphate + H(+). Its pathway is aminoacyl-tRNA biosynthesis; selenocysteinyl-tRNA(Sec) biosynthesis; L-seryl-tRNA(Sec) from L-serine and tRNA(Sec): step 1/1. Its function is as follows. Catalyzes the attachment of serine to tRNA(Ser). Is also able to aminoacylate tRNA(Sec) with serine, to form the misacylated tRNA L-seryl-tRNA(Sec), which will be further converted into selenocysteinyl-tRNA(Sec). This Shewanella baltica (strain OS155 / ATCC BAA-1091) protein is Serine--tRNA ligase.